The primary structure comprises 94 residues: Aspartyl/glutamyl-tRNA(Asn/Gln) amidotransferase subunit C (94 aa).

This sequence belongs to the GatC family. Heterotrimer of A, B and C subunits.

It catalyses the reaction L-glutamyl-tRNA(Gln) + L-glutamine + ATP + H2O = L-glutaminyl-tRNA(Gln) + L-glutamate + ADP + phosphate + H(+). It carries out the reaction L-aspartyl-tRNA(Asn) + L-glutamine + ATP + H2O = L-asparaginyl-tRNA(Asn) + L-glutamate + ADP + phosphate + 2 H(+). In terms of biological role, allows the formation of correctly charged Asn-tRNA(Asn) or Gln-tRNA(Gln) through the transamidation of misacylated Asp-tRNA(Asn) or Glu-tRNA(Gln) in organisms which lack either or both of asparaginyl-tRNA or glutaminyl-tRNA synthetases. The reaction takes place in the presence of glutamine and ATP through an activated phospho-Asp-tRNA(Asn) or phospho-Glu-tRNA(Gln). This Caldicellulosiruptor bescii (strain ATCC BAA-1888 / DSM 6725 / KCTC 15123 / Z-1320) (Anaerocellum thermophilum) protein is Aspartyl/glutamyl-tRNA(Asn/Gln) amidotransferase subunit C.